The primary structure comprises 844 residues: DNA mismatch repair protein MutS (844 aa).

Position 610-617 (610-617 (GPNMGGKS)) interacts with ATP.

It belongs to the DNA mismatch repair MutS family.

Functionally, this protein is involved in the repair of mismatches in DNA. It is possible that it carries out the mismatch recognition step. This protein has a weak ATPase activity. The polypeptide is DNA mismatch repair protein MutS (Francisella tularensis subsp. holarctica (strain FTNF002-00 / FTA)).